Reading from the N-terminus, the 694-residue chain is Polyribonucleotide nucleotidyltransferase (694 aa).

2 residues coordinate Mg(2+): aspartate 485 and aspartate 491. In terms of domain architecture, KH spans 552 to 611; the sequence is PRIETMQIKPNKIATVIGPGGKQIRQIIEEAGVQIDINDSGLVSISASSPQAIEKAKSII. The S1 motif domain occupies 621–689; it reads GKIYEGRVTS…EKGQYKLSHK (69 aa).

This sequence belongs to the polyribonucleotide nucleotidyltransferase family. Mg(2+) is required as a cofactor.

The protein resides in the cytoplasm. The catalysed reaction is RNA(n+1) + phosphate = RNA(n) + a ribonucleoside 5'-diphosphate. Functionally, involved in mRNA degradation. Catalyzes the phosphorolysis of single-stranded polyribonucleotides processively in the 3'- to 5'-direction. In Chlamydia felis (strain Fe/C-56) (Chlamydophila felis), this protein is Polyribonucleotide nucleotidyltransferase.